A 357-amino-acid polypeptide reads, in one-letter code: Ribosomal RNA large subunit methyltransferase M (357 aa).

Residues S190, 223-226, D242, D262, and D278 contribute to the S-adenosyl-L-methionine site; that span reads APGG. K307 acts as the Proton acceptor in catalysis.

It belongs to the class I-like SAM-binding methyltransferase superfamily. RNA methyltransferase RlmE family. RlmM subfamily. Monomer.

Its subcellular location is the cytoplasm. It catalyses the reaction cytidine(2498) in 23S rRNA + S-adenosyl-L-methionine = 2'-O-methylcytidine(2498) in 23S rRNA + S-adenosyl-L-homocysteine + H(+). Functionally, catalyzes the 2'-O-methylation at nucleotide C2498 in 23S rRNA. The polypeptide is Ribosomal RNA large subunit methyltransferase M (Chromohalobacter salexigens (strain ATCC BAA-138 / DSM 3043 / CIP 106854 / NCIMB 13768 / 1H11)).